A 252-amino-acid polypeptide reads, in one-letter code: UPF0714 protein YndL (252 aa).

The chain crosses the membrane as a helical span at residues 33-51; that stretch reads IVKLLMIFMVFTPISSIYA.

It belongs to the UPF0714 family.

The protein resides in the cell membrane. The protein is UPF0714 protein YndL (yndL) of Bacillus subtilis (strain 168).